The primary structure comprises 41 residues: Large ribosomal subunit protein bL36 (41 aa).

The protein belongs to the bacterial ribosomal protein bL36 family.

The protein is Large ribosomal subunit protein bL36 of Stenotrophomonas maltophilia (strain R551-3).